Reading from the N-terminus, the 172-residue chain is RNA silencing suppressor p19 (172 aa).

Residues 153–172 (EGNVSGGSPEGIEAFEKESE) are disordered.

The protein belongs to the tombusvirus protein p19 family. In terms of assembly, homodimer.

Its function is as follows. Viral suppressor of RNA silencing which binds specifically to silencing RNAs (siRNAs). Acts as a molecular caliper to specifically select siRNAs based on the length of the duplex region of the RNA. In Pelargonium zonale (PeNSV), this protein is RNA silencing suppressor p19.